The following is a 121-amino-acid chain: MARVKRGVTTHARHKKILNLAKGYRGRAKSCYRIALQRVEKALQYAYRDRRNRKRDFRSLWIIRINAAAREHGLTYGRFMHGLALAGVDLNRKILAEMAVNYKDDFTKLAETVSSKLAENS.

Belongs to the bacterial ribosomal protein bL20 family.

In terms of biological role, binds directly to 23S ribosomal RNA and is necessary for the in vitro assembly process of the 50S ribosomal subunit. It is not involved in the protein synthesizing functions of that subunit. The protein is Large ribosomal subunit protein bL20 of Wolbachia sp. subsp. Brugia malayi (strain TRS).